We begin with the raw amino-acid sequence, 393 residues long: Purine permease 14 (393 aa).

Ala-2 bears the N-acetylalanine mark. A run of 10 helical transmembrane segments spans residues 46–66 (WPTI…AKLL), 90–110 (TQSL…LIFI), 133–153 (LAVI…LAAM), 161–181 (GVFT…AAFI), 189–209 (WVVI…SSSF), 225–245 (WAAL…QNVF), 268–288 (VIIF…LIAG), 308–328 (VMAM…IVGL), 339–359 (VISV…FNFM), and 363–383 (FDAF…AYFF).

Belongs to the purine permeases (TC 2.A.7.14) family. As to expression, expressed in seedlings, leaves, embryos, ovules, seeds and the root and shoot meristems. In heart-stage embryos, detected in cells that failed to respond to cytokinins, including the prospective cotyledons.

Its subcellular location is the cell membrane. Its function is as follows. Purine permease implicated in ATP-dependent cytokinin translocation that controls the spatiotemporal landscape of cytokinin signaling. Depletes ligands from the apoplast, which leads to a suppression of the cytokinin response. The chain is Purine permease 14 from Arabidopsis thaliana (Mouse-ear cress).